The sequence spans 463 residues: Flotillin-like protein 2 (463 aa).

The S-palmitoyl cysteine moiety is linked to residue Cys-35. Residues 305 to 354 (EYETKVQEANWELYNKQKQAEAVLYEKQKQAEAQKAEADATFYSKQKEAE) adopt a coiled-coil conformation.

The protein belongs to the band 7/mec-2 family. Flotillin subfamily. In terms of processing, may be palmitoylated.

It is found in the cell membrane. The protein resides in the membrane. Its subcellular location is the caveola. May act as a scaffolding protein within caveolar membranes, functionally participating in formation of caveolae or caveolae-like vesicles. The chain is Flotillin-like protein 2 (FLOT2) from Arabidopsis thaliana (Mouse-ear cress).